The following is a 349-amino-acid chain: N-acetyl-gamma-glutamyl-phosphate reductase (349 aa).

Cys149 is a catalytic residue.

This sequence belongs to the NAGSA dehydrogenase family. Type 1 subfamily.

The protein localises to the cytoplasm. It catalyses the reaction N-acetyl-L-glutamate 5-semialdehyde + phosphate + NADP(+) = N-acetyl-L-glutamyl 5-phosphate + NADPH + H(+). The protein operates within amino-acid biosynthesis; L-arginine biosynthesis; N(2)-acetyl-L-ornithine from L-glutamate: step 3/4. In terms of biological role, catalyzes the NADPH-dependent reduction of N-acetyl-5-glutamyl phosphate to yield N-acetyl-L-glutamate 5-semialdehyde. This chain is N-acetyl-gamma-glutamyl-phosphate reductase, found in Acinetobacter baumannii (strain SDF).